A 330-amino-acid chain; its full sequence is Diacylglycerol kinase (330 aa).

Residues 1–132 form the DAGKc domain; sequence MRKCARIIYN…VDIGKMNNRY (132 aa). ATP contacts are provided by residues 10–14, T41, 67–73, and T94; these read NPTSG and GDGTLNE. Mg(2+) is bound by residues K213, D216, and H218. Catalysis depends on E273, which acts as the Proton acceptor.

The protein belongs to the diacylglycerol/lipid kinase family. In terms of assembly, homodimer. Mg(2+) is required as a cofactor.

The catalysed reaction is a 1,2-diacyl-sn-glycerol + ATP = a 1,2-diacyl-sn-glycero-3-phosphate + ADP + H(+). Catalyzes the phosphorylation of diacylglycerol (DAG) into phosphatidic acid. Is a key enzyme involved in the production of lipoteichoic acid by reintroducing DAG formed from the breakdown of membrane phospholipids into the phosphatidylglycerol biosynthetic pathway. The sequence is that of Diacylglycerol kinase (dagK) from Staphylococcus haemolyticus (strain JCSC1435).